The following is a 259-amino-acid chain: Global transcriptional regulator CodY (259 aa).

The tract at residues Met1–Leu155 is GAF domain. A DNA-binding region (H-T-H motif) is located at residues Ala203–Arg222. Phosphoserine is present on Ser215.

It belongs to the CodY family.

It is found in the cytoplasm. DNA-binding global transcriptional regulator which is involved in the adaptive response to starvation and acts by directly or indirectly controlling the expression of numerous genes in response to nutrient availability. During rapid exponential growth, CodY is highly active and represses genes whose products allow adaptation to nutrient depletion. The sequence is that of Global transcriptional regulator CodY from Geobacillus sp. (strain WCH70).